Consider the following 234-residue polypeptide: MSCINLPTVLPGSPSKTRGQIQVILGPMFSGKSTELMRRVRRFQIAQYKCLVIKYAKDTRYSSSFCTHDRNTMEALPACLLRDVAQEALGVAVIGIDEGQFFPDIVEFCEAMANAGKTVIVAALDGTFQRKPFGAILNLVPLAESVVKLTAVCMECFREAAYTKRLGTEKEVEVIGGADKYHSVCRLCYFKKASGQPAGPDNKENCPVPGKPGEAVAARKLFAPQQILQCSPAN.

N-acetylserine is present on Ser-2. Phosphoserine is present on residues Ser-2 and Ser-13. ATP contacts are provided by residues 26 to 33 (GPMFSGKS), 58 to 60 (DTR), and 97 to 100 (DEGQ). Catalysis depends on Glu-98, which acts as the Proton acceptor. Phe-128 is a binding site for substrate. Zn(2+) is bound by residues Cys-153 and Cys-156. Residues 172–176 (VEVIG) and Tyr-181 contribute to the substrate site. Zn(2+)-binding residues include Cys-185 and Cys-188. The KEN box motif lies at 203-205 (KEN). Ser-231 is modified (phosphoserine).

It belongs to the thymidine kinase family. In terms of assembly, homotetramer. Tetramerization from dimerization is induced by ATP and increases catalytic efficiency due to a high affinity for thymidine. Tetramerization is inhibited by phosphorylation at Ser-13. Interacts (via the KEN box) with FZR1. Phosphorylated on Ser-13 in mitosis. Phosphorylation of Ser-13 by CDK1 during mitosis reduces homotetramerization and catalytic efficiency when DNA replication is complete and intracellular TK1 is still present at a high level. In terms of processing, polyubiquitinated. Postmitosis, ubiquitination leads to proteasomal degradation. The KEN box sequence located at the C-terminal region targets for degradation by the anaphase promoting complex (APC/C) activated and rate-limited by FZR1.

It localises to the cytoplasm. It catalyses the reaction thymidine + ATP = dTMP + ADP + H(+). Its function is as follows. Cell-cycle-regulated enzyme of importance in nucleotide metabolism. Catalyzes the first enzymatic step in the salvage pathway converting thymidine into thymidine monophosphate. Transcriptional regulation limits expression to the S phase of the cell cycle and transient expression coincides with the oscillation in the intracellular dTTP concentration. Also important for the activation of anticancer and antiviral nucleoside analog prodrugs such as 1-b-d-arabinofuranosylcytosine (AraC) and 3c-azido-3c-deoxythymidine (AZT). The chain is Thymidine kinase, cytosolic from Homo sapiens (Human).